Reading from the N-terminus, the 376-residue chain is Chaperone protein DnaJ (376 aa).

The J domain maps to 5–70 (DYYEILGVSK…QKRAAYDQYG (66 aa)). The CR-type zinc finger occupies 131-209 (GVTKEIRIPT…CHGHGRVERS (79 aa)). Zn(2+) contacts are provided by Cys-144, Cys-147, Cys-161, Cys-164, Cys-183, Cys-186, Cys-197, and Cys-200. 4 CXXCXGXG motif repeats span residues 144–151 (CDVCHGSG), 161–168 (CPTCHGSG), 183–190 (CPHCQGRG), and 197–204 (CNKCHGHG).

Belongs to the DnaJ family. In terms of assembly, homodimer. Zn(2+) serves as cofactor.

The protein localises to the cytoplasm. Its function is as follows. Participates actively in the response to hyperosmotic and heat shock by preventing the aggregation of stress-denatured proteins and by disaggregating proteins, also in an autonomous, DnaK-independent fashion. Unfolded proteins bind initially to DnaJ; upon interaction with the DnaJ-bound protein, DnaK hydrolyzes its bound ATP, resulting in the formation of a stable complex. GrpE releases ADP from DnaK; ATP binding to DnaK triggers the release of the substrate protein, thus completing the reaction cycle. Several rounds of ATP-dependent interactions between DnaJ, DnaK and GrpE are required for fully efficient folding. Also involved, together with DnaK and GrpE, in the DNA replication of plasmids through activation of initiation proteins. The polypeptide is Chaperone protein DnaJ (Shigella flexneri).